Reading from the N-terminus, the 322-residue chain is Sideroflexin fsf1 (322 aa).

A run of 4 helical transmembrane segments spans residues 143–163 (SYIY…KIVP), 175–195 (VLGR…NVFL), 229–249 (TALS…LVLM), and 269–289 (LGLI…VFPA).

Belongs to the sideroflexin family.

The protein localises to the mitochondrion membrane. Mitochondrial amino-acid transporter that mediates transport of serine into mitochondria. The protein is Sideroflexin fsf1 of Schizosaccharomyces pombe (strain 972 / ATCC 24843) (Fission yeast).